Here is a 423-residue protein sequence, read N- to C-terminus: Sphingomyelin phosphodiesterase 2 (423 aa).

E49 provides a ligand contact to Mg(2+). Catalysis depends on H272, which acts as the Proton acceptor. Helical transmembrane passes span 330–350 (VIGLGLLLLALLCVLAAGGGA) and 354–374 (AILLWTPSVGLVLWAGAFYLF). A disordered region spans residues 400–423 (QDLGPEPQPALLLGQQEGDRTKEQ).

The protein belongs to the neutral sphingomyelinase family. The cofactor is Mg(2+).

It is found in the cell membrane. It catalyses the reaction a sphingomyelin + H2O = phosphocholine + an N-acylsphing-4-enine + H(+). The catalysed reaction is an N-(acyl)-sphingosylphosphocholine + H2O = an N-acyl-sphingoid base + phosphocholine + H(+). It carries out the reaction 1-O-octadecyl-sn-glycero-3-phosphocholine + H2O = 1-O-octadecyl-sn-glycerol + phosphocholine + H(+). The enzyme catalyses 1-O-hexadecyl-sn-glycero-3-phosphocholine + H2O = 1-O-hexadecyl-sn-glycerol + phosphocholine + H(+). It catalyses the reaction 1-hexadecanoyl-sn-glycero-3-phosphocholine + H2O = 1-hexadecanoyl-sn-glycerol + phosphocholine + H(+). The catalysed reaction is a sphingosylphosphocholine + H2O = a sphingoid base + phosphocholine + H(+). The protein operates within lipid metabolism; sphingolipid metabolism. Functionally, catalyzes, at least in vitro, the hydrolysis of sphingomyelin to form ceramide and phosphocholine. Also hydrolyzes 1-O-alkyl-2-lyso-sn-glycero-3-phosphocholine (lyso-platelet-activating factor) in vivo. Also acts on 1-acyl-2-lyso-sn-glycero-3-phosphocholine (lyso-PC) and sphingosylphosphocholine. This Homo sapiens (Human) protein is Sphingomyelin phosphodiesterase 2.